The following is a 366-amino-acid chain: MRVMAPRTLILLLSGALALTETWAGSHSMRYFYTSVSRPGRGEPRFISVGYVDDTQFVRFDSDAASPRGEPRAPWVEQEGPEYWDRETQKYKRQAQTDRVNLRKLRGYYNQSEDGSHTLQSMYGCDLGPDGRLLRGYSQFAYDGKDYIALNEDLRSWTAADTAAQITQRKLEAARAAEQQRAYLEGLCVESLRRYLENGKETLQRAEPPKTHVTHHPLSDHEATLRCWALGFYPAEITLTWQRDGEDQTQDTELVETRPAGDGTFQKWAAVVVPSGQEQRYTCHMQHEGLPEPLTLRWEPSSQPTIPIVGIVVGLAVLVVLAVLGAVVTAMMCRRKSSGGKGGSCSQAACSNSAQGSDESLITCKA.

The N-terminal stretch at 1–24 (MRVMAPRTLILLLSGALALTETWA) is a signal peptide. An alpha-1 region spans residues 25–114 (GSHSMRYFYT…LRGYYNQSED (90 aa)). Topologically, residues 25-308 (GSHSMRYFYT…EPSSQPTIPI (284 aa)) are extracellular. Asparagine 110 is a glycosylation site (N-linked (GlcNAc...) asparagine). Residues 115–206 (GSHTLQSMYG…ENGKETLQRA (92 aa)) form an alpha-2 region. 2 disulfide bridges follow: cysteine 125–cysteine 188 and cysteine 227–cysteine 283. The segment at 207–298 (EPPKTHVTHH…GLPEPLTLRW (92 aa)) is alpha-3. The 89-residue stretch at 209-297 (PKTHVTHHPL…EGLPEPLTLR (89 aa)) folds into the Ig-like C1-type domain. Residues 299-308 (EPSSQPTIPI) form a connecting peptide region. A helical membrane pass occupies residues 309–332 (VGIVVGLAVLVVLAVLGAVVTAMM). The Cytoplasmic segment spans residues 333–366 (CRRKSSGGKGGSCSQAACSNSAQGSDESLITCKA).

Belongs to the MHC class I family. In terms of assembly, heterodimer of an alpha chain and a beta chain (beta-2-microglobulin).

It is found in the membrane. In terms of biological role, involved in the presentation of foreign antigens to the immune system. The protein is Class I histocompatibility antigen, Gogo-C*0202 alpha chain of Gorilla gorilla gorilla (Western lowland gorilla).